The chain runs to 978 residues: Probable serine/threonine-protein kinase PLK (978 aa).

Residues 19-36 are compositionally biased toward low complexity; sequence IQIQQQQFKQPQQQPQQK. Disordered stretches follow at residues 19 to 66 and 121 to 143; these read IQIQ…SSIH and QQQQQQQQMPPPQSLPNKSNEPQ. Residues 37-53 show a composition bias toward polar residues; the sequence is SNSCFSDQENYPANIQP. Over residues 54–64 the composition is skewed to low complexity; it reads SSSTSSSSSSS. The Protein kinase domain occupies 163–416; it reads YRQGEFLGKG…LTQILEHDFF (254 aa). ATP is bound by residues 169–177 and Lys192; that span reads LGKGGFAKC. Asp286 serves as the catalytic Proton acceptor. Disordered stretches follow at residues 463–554 and 601–638; these read GTTS…FANL and ENQQQQQQQQQQQQQQQQQQQRVNNNINNNGNTVTVTT. Composition is skewed to low complexity over residues 473 to 492 and 500 to 549; these read HHYQQYQQQPQQQYNNNYQQ and INNM…NINN. 2 coiled-coil regions span residues 497 to 555 and 592 to 630; these read KKQI…ANLS and IKQQYTNMNENQQQQQQQQQQQQQQQQQQQRVNNNINNN. One can recognise a POLO box 1 domain in the interval 696-780; that stretch reads YISQYADFTN…IKYFLNHFTN (85 aa). The disordered stretch occupies residues 798–819; sequence NNNNNNNVENVTNNNNNNSNNS. The POLO box 2 domain occupies 826 to 904; sequence YVKKWIKFDN…IYGTLSNNLY (79 aa). Residues 908 to 978 are disordered; that stretch reads PESSFQQLPQ…SIPQPQLINQ (71 aa). Low complexity predominate over residues 913–978; the sequence is QQLPQQQYQQ…SIPQPQLINQ (66 aa).

The protein belongs to the protein kinase superfamily. Ser/Thr protein kinase family. CDC5/Polo subfamily.

It carries out the reaction L-seryl-[protein] + ATP = O-phospho-L-seryl-[protein] + ADP + H(+). It catalyses the reaction L-threonyl-[protein] + ATP = O-phospho-L-threonyl-[protein] + ADP + H(+). The protein is Probable serine/threonine-protein kinase PLK (PLK) of Dictyostelium discoideum (Social amoeba).